Reading from the N-terminus, the 309-residue chain is Homoserine O-succinyltransferase (309 aa).

Cys142 serves as the catalytic Acyl-thioester intermediate. Substrate is bound by residues Lys163 and Ser192. The active-site Proton acceptor is His235. Glu237 is a catalytic residue. Residue Arg249 participates in substrate binding.

It belongs to the MetA family.

Its subcellular location is the cytoplasm. It catalyses the reaction L-homoserine + succinyl-CoA = O-succinyl-L-homoserine + CoA. It participates in amino-acid biosynthesis; L-methionine biosynthesis via de novo pathway; O-succinyl-L-homoserine from L-homoserine: step 1/1. Transfers a succinyl group from succinyl-CoA to L-homoserine, forming succinyl-L-homoserine. This Edwardsiella ictaluri (strain 93-146) protein is Homoserine O-succinyltransferase.